The chain runs to 574 residues: Sulfate adenylyltransferase (574 aa).

The tract at residues 1–170 is N-terminal; the sequence is MANAPHGGVL…VQAVSKPAYY (170 aa). Residues 171–395 are catalytic; sequence DYVALRYTPA…LRESYPPKAK (225 aa). Residue Q198 coordinates sulfate. Residues 198-201 and 292-295 each bind ATP; these read QTRN and GRDH. Active-site residues include T199, R200, and N201. Position 200 (R200) interacts with sulfate. A296 is a sulfate binding site. An ATP-binding site is contributed by M334. The tract at residues 396–574 is allosteric regulation domain; adenylyl-sulfate kinase-like; it reads QGFTLFLTGL…ILLLEAQSLI (179 aa). 3'-phosphoadenylyl sulfate-binding positions include 435–438, R452, 478–479, and K519; these read ETVR and IA.

In the N-terminal section; belongs to the sulfate adenylyltransferase family. This sequence in the C-terminal section; belongs to the APS kinase family. As to quaternary structure, homohexamer. Dimer of trimers.

Its subcellular location is the cytoplasm. It carries out the reaction sulfate + ATP + H(+) = adenosine 5'-phosphosulfate + diphosphate. It functions in the pathway sulfur metabolism; hydrogen sulfide biosynthesis; sulfite from sulfate: step 1/3. Allosterically inhibited by 3'-phosphoadenosine 5'-phosphosulfate (PAPS). Its function is as follows. Catalyzes the first intracellular reaction of sulfate assimilation, forming adenosine-5'-phosphosulfate (APS) from inorganic sulfate and ATP. Plays an important role in sulfate activation as a component of the biosynthesis pathway of sulfur-containing amino acids. This chain is Sulfate adenylyltransferase, found in Mycosarcoma maydis (Corn smut fungus).